The chain runs to 265 residues: Imidazole glycerol phosphate synthase subunit HisF (265 aa).

Catalysis depends on residues Asp12 and Asp131.

The protein belongs to the HisA/HisF family. As to quaternary structure, heterodimer of HisH and HisF.

It localises to the cytoplasm. The enzyme catalyses 5-[(5-phospho-1-deoxy-D-ribulos-1-ylimino)methylamino]-1-(5-phospho-beta-D-ribosyl)imidazole-4-carboxamide + L-glutamine = D-erythro-1-(imidazol-4-yl)glycerol 3-phosphate + 5-amino-1-(5-phospho-beta-D-ribosyl)imidazole-4-carboxamide + L-glutamate + H(+). It functions in the pathway amino-acid biosynthesis; L-histidine biosynthesis; L-histidine from 5-phospho-alpha-D-ribose 1-diphosphate: step 5/9. IGPS catalyzes the conversion of PRFAR and glutamine to IGP, AICAR and glutamate. The HisF subunit catalyzes the cyclization activity that produces IGP and AICAR from PRFAR using the ammonia provided by the HisH subunit. The protein is Imidazole glycerol phosphate synthase subunit HisF of Alkalilimnicola ehrlichii (strain ATCC BAA-1101 / DSM 17681 / MLHE-1).